Consider the following 118-residue polypeptide: Large ribosomal subunit protein bL19 (118 aa).

Belongs to the bacterial ribosomal protein bL19 family.

This protein is located at the 30S-50S ribosomal subunit interface and may play a role in the structure and function of the aminoacyl-tRNA binding site. This chain is Large ribosomal subunit protein bL19, found in Campylobacter curvus (strain 525.92).